Reading from the N-terminus, the 128-residue chain is MTSLFTQEIRLSKRHEKIVSQRLMLLQQMENKPEDQNKGRASQTQAAKAALQRNVSLLKDIEAAEKSLQTRMYPALPPEVAALETLYWASVEEYIPKWEQFLLGRAPYPACSENGNEAEDTIPKRAQQ.

It localises to the cell projection. Its subcellular location is the cilium. Its function is as follows. May play a role in ciliary assembly. The protein is Centrosomal protein 15 (CEP15) of Bos taurus (Bovine).